Consider the following 258-residue polypeptide: Gene 3 protein (258 aa).

Residues 163 to 176 show a composition bias toward polar residues; that stretch reads STENLLGQTQSSTH. The interval 163 to 258 is disordered; it reads STENLLGQTQ…TRRYPPSFFK (96 aa). Residues 214–240 show a composition bias toward basic and acidic residues; that stretch reads SIREETVSGMARAREECNSPSEHDRLT.

The chain is Gene 3 protein from Equine herpesvirus 1 (strain Kentucky A) (EHV-1).